Consider the following 330-residue polypeptide: GTPase Obg (330 aa).

Residues 1–159 enclose the Obg domain; that stretch reads MNFIDEVKIC…MWIHLSLKLL (159 aa). Residues 160–327 form the OBG-type G domain; sequence SDVGLVGLPN…IVKLALKTIK (168 aa). Residues 166–173, 191–195, 212–215, 279–282, and 308–310 each bind GTP; these read GLPNAGKS, FTTLV, DIPG, NKCD, and STY. Positions 173 and 193 each coordinate Mg(2+).

The protein belongs to the TRAFAC class OBG-HflX-like GTPase superfamily. OBG GTPase family. In terms of assembly, monomer. Mg(2+) is required as a cofactor.

The protein resides in the cytoplasm. In terms of biological role, an essential GTPase which binds GTP, GDP and possibly (p)ppGpp with moderate affinity, with high nucleotide exchange rates and a fairly low GTP hydrolysis rate. Plays a role in control of the cell cycle, stress response, ribosome biogenesis and in those bacteria that undergo differentiation, in morphogenesis control. This is GTPase Obg from Rickettsia felis (strain ATCC VR-1525 / URRWXCal2) (Rickettsia azadi).